Here is a 437-residue protein sequence, read N- to C-terminus: C-terminal-binding protein 2 (437 aa).

Residues Ser-103, 183 to 188, Asp-207, 240 to 246, 267 to 269, and Asp-293 each bind NAD(+); these read IGLGRI, CNLNEHN, and TAR. The active site involves Arg-269. Glu-298 is an active-site residue. Residue His-318 is the Proton donor of the active site. Residue 318-321 participates in NAD(+) binding; it reads HTAW. A disordered region spans residues 410-437; that stretch reads PLIPSVSHTPSPGQTTKPDPDREIPTDQ. Polar residues predominate over residues 415-426; that stretch reads VSHTPSPGQTTK. The segment covering 427–437 has biased composition (basic and acidic residues); the sequence is PDPDREIPTDQ.

The protein belongs to the D-isomer specific 2-hydroxyacid dehydrogenase family. In terms of assembly, interacts with the C-terminus of tcf7l1-a via the consensus motifs P-X-[DNS]-L-[STVA].

The protein localises to the nucleus. Functionally, corepressor targeting diverse transcription regulators. The polypeptide is C-terminal-binding protein 2 (ctbp2) (Xenopus laevis (African clawed frog)).